A 218-amino-acid chain; its full sequence is Copper acquisition factor BIM1 (218 aa).

Residues 1-19 form the signal peptide; sequence MFALKFILITSFIASTALA. Positions 20 and 65 each coordinate Cu(2+). Disulfide bonds link Cys-40-Cys-144 and Cys-110-Cys-161. N-linked (GlcNAc...) asparagine glycans are attached at residues Asn-87, Asn-91, and Asn-124. Asp-138 lines the Cu(2+) pocket. Residues Asn-158 and Asn-170 are each glycosylated (N-linked (GlcNAc...) asparagine). The tract at residues 160–194 is disordered; the sequence is TCTDDASRTSNASSTSSGSATATSAAATSSSSGTS. Low complexity predominate over residues 167–194; the sequence is RTSNASSTSSGSATATSAAATSSSSGTS. Ser-190 carries GPI-anchor amidated serine lipidation. A propeptide spans 191–218 (removed in mature form); the sequence is SGTSGAIKEVVGLGALSLALGIAGLIIL.

The protein belongs to the X325 family. The cofactor is Cu(2+).

Its subcellular location is the cell membrane. In terms of biological role, lytic polysaccharide monooxygenase-like protein that has diverged to biological functions other than polysaccharide degradation since it does not perform oxidative cleavage of polysaccharides. Cell surface-bound protein that functions in the copper-accumulation pathway shared by the CUF1-dependent copper transporter CTR1. Involved in maintaining cell wall integrity during copper deficiency. Binds Cu(2+) with an estimated 1:1 stoichiometry and might serve as an extracellular copper ligand. FRE4 and FRE7 metalloreductases probably function together with CTR1 and BIM1 to liberate the Cu(2+) bound to the BIM1 copper-binding site for subsequent import of Cu(+) into the cell by CTR1, via the reduction of BIM1-bound Cu(2+) to Cu(+) to reduce binding affinity for BIM1 but increase affinity for CTR1. Facilitates copper acquisition in the brain of mammalian hosts and acts as a copper-dependent virulence trait in fungal meningitis. While BIM1 plays a critical role in cryptococcal meningitis, at least in part through its role in copper acquisition, it could play additional roles during copper limitation or as a means to invade and colonize host tissues in the brain, by compromising host carbohydrate integrity via its lytic polysaccharide monooxygenase (LPMO) activity, which has still to be determined. The chain is Copper acquisition factor BIM1 from Cryptococcus neoformans var. neoformans serotype D (strain JEC21 / ATCC MYA-565) (Filobasidiella neoformans).